A 414-amino-acid chain; its full sequence is Putative F-box/kelch-repeat protein At1g20940 (414 aa).

The F-box domain occupies 13-65; it reads SSIINDLPLDLLDEILFRLEPKSMAMMRCTNNSIKSYLSDPRFGPEYPSWVRP. Kelch repeat units lie at residues 281 to 328 and 331 to 378; these read LTLI…MYDG and LVVR…KLTP.

Interacts with DEK3.

It participates in protein modification; protein ubiquitination. Its function is as follows. Probable component of an E3 ubiquitin ligase complex. This Arabidopsis thaliana (Mouse-ear cress) protein is Putative F-box/kelch-repeat protein At1g20940.